The following is a 431-amino-acid chain: Gamma-glutamyl phosphate reductase (431 aa).

The protein belongs to the gamma-glutamyl phosphate reductase family.

It is found in the cytoplasm. It carries out the reaction L-glutamate 5-semialdehyde + phosphate + NADP(+) = L-glutamyl 5-phosphate + NADPH + H(+). It functions in the pathway amino-acid biosynthesis; L-proline biosynthesis; L-glutamate 5-semialdehyde from L-glutamate: step 2/2. In terms of biological role, catalyzes the NADPH-dependent reduction of L-glutamate 5-phosphate into L-glutamate 5-semialdehyde and phosphate. The product spontaneously undergoes cyclization to form 1-pyrroline-5-carboxylate. This is Gamma-glutamyl phosphate reductase from Synechococcus elongatus (strain ATCC 33912 / PCC 7942 / FACHB-805) (Anacystis nidulans R2).